Consider the following 154-residue polypeptide: Leghemoglobin-1 (154 aa).

The Globin domain occupies 3 to 151 (VLTDVQVALV…LAIIIKKEMK (149 aa)). Serine 46 provides a ligand contact to heme b. A Phosphoserine modification is found at serine 46. Histidine 64 is an O2 binding site. Heme b contacts are provided by lysine 67, histidine 98, and lysine 101. Nitrated tyrosine is present on tyrosine 139.

This sequence belongs to the plant globin family. In terms of assembly, monomer. Post-translationally, nitrated in effective nodules and particularly in hypoxic conditions; this mechanism may play a protective role in the symbiosis by buffering toxic peroxynitrite NO(2)(-). Nitration level decrease during nodule senescence. Phosphorylation at Ser-46 disrupts the molecular environment of its porphyrin ring oxygen binding pocket, thus leading to a reduced oxygen consumption and to the delivery of oxygen O(2) to symbiosomes. As to expression, accumulates in developing root nodules and present in roots, especially in the upper part. Detected in leaves at low levels.

It is found in the cytoplasm. The protein resides in the cytosol. Its subcellular location is the nucleus. Functionally, leghemoglobin that reversibly binds oxygen O(2) through a pentacoordinated heme iron. In root nodules, facilitates the diffusion of oxygen to the bacteroids while preventing the bacterial nitrogenase from being inactivated by buffering dioxygen, nitric oxide and carbon monoxide, and promoting the formation of reactive oxygen species (ROS, e.g. H(2)O(2)). This role is essential for symbiotic nitrogen fixation (SNF). This chain is Leghemoglobin-1, found in Lupinus luteus (European yellow lupine).